Consider the following 163-residue polypeptide: Ribosome maturation factor RimM (163 aa).

The region spanning 92–161 (PGEYYHHDLI…AETVTVNAAF (70 aa)) is the PRC barrel domain.

The protein belongs to the RimM family. As to quaternary structure, binds ribosomal protein uS19.

The protein localises to the cytoplasm. Its function is as follows. An accessory protein needed during the final step in the assembly of 30S ribosomal subunit, possibly for assembly of the head region. Essential for efficient processing of 16S rRNA. May be needed both before and after RbfA during the maturation of 16S rRNA. It has affinity for free ribosomal 30S subunits but not for 70S ribosomes. This Sphingopyxis alaskensis (strain DSM 13593 / LMG 18877 / RB2256) (Sphingomonas alaskensis) protein is Ribosome maturation factor RimM.